The chain runs to 231 residues: NADH-ubiquinone oxidoreductase chain 4 (231 aa).

7 helical membrane passes run 1-21 (PIAGSMVLAAILLKLGGYGII), 34-54 (MFLPFIVLALWGAILANLTCL), 63-85 (IAYSSVSHMGLVAAAIIIQTPWG), 89-111 (AMALMIAHGFTSSALFCLANTTY), 128-148 (ILPMTSTWWLLANLMNIATPP), 169-189 (TIILLGLSMLITASYSLHMFL), and 211-231 (LLMTLHLIPLMMISMKPELVI).

The protein belongs to the complex I subunit 4 family.

It localises to the mitochondrion membrane. It carries out the reaction a ubiquinone + NADH + 5 H(+)(in) = a ubiquinol + NAD(+) + 4 H(+)(out). Functionally, core subunit of the mitochondrial membrane respiratory chain NADH dehydrogenase (Complex I) that is believed to belong to the minimal assembly required for catalysis. Complex I functions in the transfer of electrons from NADH to the respiratory chain. The immediate electron acceptor for the enzyme is believed to be ubiquinone. The chain is NADH-ubiquinone oxidoreductase chain 4 (MT-ND4) from Porthidium ophryomegas (Slender hognose viper).